The primary structure comprises 156 residues: Ribosome maturation factor RimP (156 aa).

The protein belongs to the RimP family.

It localises to the cytoplasm. Functionally, required for maturation of 30S ribosomal subunits. The protein is Ribosome maturation factor RimP of Microcystis aeruginosa (strain NIES-843 / IAM M-2473).